A 233-amino-acid polypeptide reads, in one-letter code: Phosphoglycolate phosphatase 2 (233 aa).

D13 functions as the Nucleophile in the catalytic mechanism. Mg(2+)-binding residues include D13 and D15. Residue K152 coordinates substrate. Mg(2+) contacts are provided by D174 and D178.

Belongs to the archaeal SPP-like hydrolase family. The cofactor is Mg(2+).

The enzyme catalyses 2-phosphoglycolate + H2O = glycolate + phosphate. Functionally, catalyzes the dephosphorylation of 2-phosphoglycolate. The chain is Phosphoglycolate phosphatase 2 from Saccharolobus solfataricus (strain ATCC 35092 / DSM 1617 / JCM 11322 / P2) (Sulfolobus solfataricus).